The following is a 294-amino-acid chain: UDP-3-O-acyl-N-acetylglucosamine deacetylase (294 aa).

H75, H232, and D236 together coordinate Zn(2+). The active-site Proton donor is H259.

This sequence belongs to the LpxC family. It depends on Zn(2+) as a cofactor.

It catalyses the reaction a UDP-3-O-[(3R)-3-hydroxyacyl]-N-acetyl-alpha-D-glucosamine + H2O = a UDP-3-O-[(3R)-3-hydroxyacyl]-alpha-D-glucosamine + acetate. Its pathway is glycolipid biosynthesis; lipid IV(A) biosynthesis; lipid IV(A) from (3R)-3-hydroxytetradecanoyl-[acyl-carrier-protein] and UDP-N-acetyl-alpha-D-glucosamine: step 2/6. Functionally, catalyzes the hydrolysis of UDP-3-O-myristoyl-N-acetylglucosamine to form UDP-3-O-myristoylglucosamine and acetate, the committed step in lipid A biosynthesis. The polypeptide is UDP-3-O-acyl-N-acetylglucosamine deacetylase (Campylobacter jejuni (strain RM1221)).